The chain runs to 540 residues: Chaperonin GroEL (540 aa).

ATP-binding positions include Thr-29–Pro-32, Asp-86–Thr-90, Gly-413, Asn-476–Ala-478, and Asp-492.

Belongs to the chaperonin (HSP60) family. Forms a cylinder of 14 subunits composed of two heptameric rings stacked back-to-back. Interacts with the co-chaperonin GroES.

Its subcellular location is the cytoplasm. The catalysed reaction is ATP + H2O + a folded polypeptide = ADP + phosphate + an unfolded polypeptide.. In terms of biological role, together with its co-chaperonin GroES, plays an essential role in assisting protein folding. The GroEL-GroES system forms a nano-cage that allows encapsulation of the non-native substrate proteins and provides a physical environment optimized to promote and accelerate protein folding. This chain is Chaperonin GroEL, found in Streptococcus gordonii.